The sequence spans 556 residues: Urocanate hydratase (556 aa).

Residues glycine 52 to glycine 53, glutamine 130, glycine 176 to glycine 178, glutamate 196, arginine 201, asparagine 242 to alanine 243, glutamine 263 to histidine 267, tyrosine 273 to leucine 274, and tyrosine 322 contribute to the NAD(+) site. Cysteine 410 is an active-site residue. Residue glycine 492 coordinates NAD(+).

It belongs to the urocanase family. The cofactor is NAD(+).

Its subcellular location is the cytoplasm. It catalyses the reaction 4-imidazolone-5-propanoate = trans-urocanate + H2O. It participates in amino-acid degradation; L-histidine degradation into L-glutamate; N-formimidoyl-L-glutamate from L-histidine: step 2/3. Functionally, catalyzes the conversion of urocanate to 4-imidazolone-5-propionate. This Bradyrhizobium sp. (strain ORS 278) protein is Urocanate hydratase.